The primary structure comprises 344 residues: MITQRQNDILNLIVELFTQTHEPVGSKALQRTIDSSSATIRNDMAKLEKLGLLEKAHTSSGRMPSPAGFKYFVEHSLRLDSIDEQDIYYVIKAFDFEAFKLEDMLQKASHILSEMTGYTSVILDVEPARQRLTGFDVVQLSNHDALAVMTLDESKPVTVQFAIPRNFLTRDLIAFKAIVEERLLDGSVMDIHYKLRTEIPQIVQKYFVTTDNVLQLFDYVFSELFLETVFVAGKVNSLTYSDLSTYQFLDNEQQVAISLRQSLKEGEMASVQVADSQEAALADVSVLTHKFLIPYRGFGLLSLIGPIDMDYRRSVSLVNIIGKVLATKLGDYYRYLNSNHYEVH.

Belongs to the HrcA family.

Negative regulator of class I heat shock genes (grpE-dnaK-dnaJ and groELS operons). Prevents heat-shock induction of these operons. The sequence is that of Heat-inducible transcription repressor HrcA from Streptococcus agalactiae serotype Ia (strain ATCC 27591 / A909 / CDC SS700).